Here is an 87-residue protein sequence, read N- to C-terminus: Neurotoxin LmNaTx64.1 (87 aa).

The first 18 residues, 1 to 18 (MKILFLIILTAFFIGVHC), serve as a signal peptide directing secretion. Positions 19-85 (KHGYPIIRAG…TWSRATNKCK (67 aa)) constitute an LCN-type CS-alpha/beta domain. 4 cysteine pairs are disulfide-bonded: Cys33–Cys84, Cys37–Cys58, Cys44–Cys65, and Cys48–Cys67. Cys84 is subject to Cysteine amide.

Belongs to the long (4 C-C) scorpion toxin superfamily. Sodium channel inhibitor family. Beta subfamily. As to expression, expressed by the venom gland.

It is found in the secreted. Binds voltage-independently at site-4 of sodium channels (Nav) and shift the voltage of activation toward more negative potentials thereby affecting sodium channel activation and promoting spontaneous and repetitive firing. The protein is Neurotoxin LmNaTx64.1 of Lychas mucronatus (Chinese swimming scorpion).